The primary structure comprises 460 residues: MTTQFKPELLSPAGSLKNMRYAFAYGADAVYAGQPRYSLRVRNNEFNHANLKIGIDEAHSLGKKFYVVVNIAPHNSKLKTFIKDLQPVIDMKPDALIMSDPGLIMLVRENFPNIDIHLSVQANAVNWATVKFWKQMGLTRVILSRELSIDEIAEIRQQVPDIELEIFVHGALCMAYSGRCLLSGYINKRDPNQGTCTNACRWEYKMEEGTTDDVGNIVPKIDPAQQIEVKNVAPTLGEGAVTDKVFLYTESQKPDEQMTAFEDKHGTYFMNSKDLRAVQHVEKLTALGVHSLKIEGRTKSFYYCARTAQVYRKAIDDAAAGKPFDESLMDTLESLAHRGYTEGFLRRHTHDEYQNYEYGYSISDRQQFVGEFTGKRNEQGMAEVAVKNKFLLGDNVEMMTPQGNINFKIEKMLNRKNETVDAALGDGHFVFLNVPQDINLNYALLMRNLVNTNTRNPHSN.

This sequence belongs to the peptidase U32 family.

In terms of biological role, involved in prephenate-dependent formation of 5-hydroxyuridine (ho5U) modification at position 34 in tRNAs, the first step in 5-carboxymethoxyuridine (cmo5U) biosynthesis. This Haemophilus influenzae (strain ATCC 51907 / DSM 11121 / KW20 / Rd) protein is tRNA hydroxylation protein P.